The following is a 523-amino-acid chain: Rho guanine nucleotide exchange factor 8 (523 aa).

Residues 44–57 show a composition bias toward polar residues; the sequence is VESNTPESQNSDSF. Disordered stretches follow at residues 44 to 83 and 442 to 523; these read VESN…ERQQ and ETSD…KDRH. The region spanning 76 to 440 is the PRONE domain; it reads GKRSERQQAD…TLALKQTLLA (365 aa). The span at 465 to 475 shows a compositional bias: basic and acidic residues; it reads EAEKHDPHSKT.

In terms of assembly, homodimer. The homodimer interacts with ARAC5/ROP4. Interacts with ARAC11/ROP1 and ARAC10/ROP11. Interacts with PRK6. In terms of tissue distribution, expressed in pollen grains and pollen tubes.

The protein resides in the cell membrane. Guanine-nucleotide exchange factor (GEF) that acts as an activator of Rop (Rho of plants) GTPases by promoting the exchange of GDP for GTP. Active as homodimer. This chain is Rho guanine nucleotide exchange factor 8, found in Arabidopsis thaliana (Mouse-ear cress).